The following is a 401-amino-acid chain: G2/mitotic-specific cyclin-B1 (401 aa).

It belongs to the cyclin family. Cyclin AB subfamily. As to quaternary structure, interacts with the CDK1 protein kinase to form a serine/threonine kinase holoenzyme complex also known as maturation promoting factor (MPF). The cyclin subunit imparts substrate specificity to the complex.

In terms of biological role, essential for the control of the cell cycle at the G2/M (mitosis) transition. In Oryzias luzonensis (Luzon ricefish), this protein is G2/mitotic-specific cyclin-B1 (ccnb1).